The chain runs to 557 residues: MYSDKKNILQLVALLKAHGVRKIVLCPGSRNAAIVHTLANIEDFTCYSVTDERSAGFFAIGLSLQGGGPAAVCCTSGSALLNLHPAVAEAFYQQVPLIVISADRPAAWIGQMDGQTLPQPHVFGTLVKMSVNLPEVHTEEDEWFCNRLINEAILETTHHGKGPVHINVPISEPIYRFTAKTLPEVRVITRYQGLSVYDRDYKELIERLNKYNKRMVVVGQMNLIYLFEKKYVKPLYKHFAWLTEHLGNQTIPGIPIKNFDAAVYSMTPERQEDMAPEILITYGGHIVSKQLKKYLRNHPPREHWHVAADGKIADLYGCLTTVIEMDPFEFLEKIAFLLDNKPTHYPLMWENYCKTIPMPDLAYSEISVIGKLIRALPEPCALHLANSSTVRYAQLFTVPPQVEICCNRGVNGIEGSLSTAIGYAAASSKLNFIIIGDLSFFYDMNALWNQNYGANIRILLLNNEGGEIFHTLPGMDKSSRSREFITAEHYTTAKGWAEERGFIYMKVTGEEELEEAMQPFTSPETRMQPMLLEVFTDKEKDTTLLREYYHGLKNKNE.

The protein belongs to the TPP enzyme family. MenD subfamily. In terms of assembly, homodimer. It depends on Mg(2+) as a cofactor. The cofactor is Mn(2+). Thiamine diphosphate serves as cofactor.

It catalyses the reaction isochorismate + 2-oxoglutarate + H(+) = 5-enolpyruvoyl-6-hydroxy-2-succinyl-cyclohex-3-ene-1-carboxylate + CO2. It functions in the pathway quinol/quinone metabolism; 1,4-dihydroxy-2-naphthoate biosynthesis; 1,4-dihydroxy-2-naphthoate from chorismate: step 2/7. Its pathway is quinol/quinone metabolism; menaquinone biosynthesis. Catalyzes the thiamine diphosphate-dependent decarboxylation of 2-oxoglutarate and the subsequent addition of the resulting succinic semialdehyde-thiamine pyrophosphate anion to isochorismate to yield 2-succinyl-5-enolpyruvyl-6-hydroxy-3-cyclohexene-1-carboxylate (SEPHCHC). The sequence is that of 2-succinyl-5-enolpyruvyl-6-hydroxy-3-cyclohexene-1-carboxylate synthase from Phocaeicola vulgatus (strain ATCC 8482 / DSM 1447 / JCM 5826 / CCUG 4940 / NBRC 14291 / NCTC 11154) (Bacteroides vulgatus).